The chain runs to 120 residues: Autophagy-related protein 8C (120 aa).

Positions 1 to 20 (MARSSFKLEHPLERRQAEAN) are disordered. A lipid anchor (Phosphatidylethanolamine amidated glycine) is attached at glycine 117. Positions 118-120 (LFV) are cleaved as a propeptide — removed in mature form.

The protein belongs to the ATG8 family. Interacts with ATG4. The C-terminal 3 residues are removed by ATG4 to expose Gly-117 at the C-terminus. The C-terminal Gly is then amidated with phosphatidylethanolamine by an activating system similar to that for ubiquitin.

It is found in the cytoplasmic vesicle. The protein resides in the autophagosome membrane. Its subcellular location is the vacuole membrane. It localises to the cytoplasm. The protein localises to the cytoskeleton. Functionally, ubiquitin-like modifier involved in autophagosomes formation. May mediate the delivery of the autophagosomes to the vacuole via the microtubule cytoskeleton. The protein is Autophagy-related protein 8C (ATG8C) of Oryza sativa subsp. indica (Rice).